Consider the following 289-residue polypeptide: MSGFSSEERAAPFTLEYRVFLKNEKGQYISPFHDIPIYADKEVFHMVVEVPRWSNAKMEIATKDPLNPIKQDVKKGKLRYVANLFPYKGYIWNYGAIPQTWEDPGHNDKHTGCCGDNDPIDVCEIGSKVCARGEIIRVKVLGILAMIDEGETDWKVIAINVEDPDAANYNDINDVKRLKPGYLEATVDWFRRYKVPDGKPENEFAFNAEFKDKNFAIDIIESTHDYWRALVTKKTDGKGISCMNTTVSESPFQCDPDAAKAIVDALPPPCESACTIPTDVDKWFHHQKN.

At S2 the chain carries N-acetylserine. An N6-acetyllysine modification is found at K57. Residues D116, D121, and D153 each contribute to the Mg(2+) site. A Phosphoserine modification is found at S250.

The protein belongs to the PPase family. In terms of assembly, homodimer. Mg(2+) is required as a cofactor. The N-terminus is blocked. In terms of tissue distribution, highest levels are found in retinal rod outer segments.

The protein resides in the cytoplasm. It catalyses the reaction diphosphate + H2O = 2 phosphate + H(+). This Bos taurus (Bovine) protein is Inorganic pyrophosphatase (PPA1).